The following is a 319-amino-acid chain: Putative replication factor C small subunit R395 (319 aa).

An ATP-binding site is contributed by 45-52; the sequence is GSPGVGKT.

It belongs to the activator 1 small subunits family. RfcS subfamily.

Functionally, part of the RFC clamp loader complex which loads the PCNA sliding clamp onto DNA. The chain is Putative replication factor C small subunit R395 from Acanthamoeba polyphaga mimivirus (APMV).